A 303-amino-acid polypeptide reads, in one-letter code: Glycine--tRNA ligase alpha subunit (303 aa).

It belongs to the class-II aminoacyl-tRNA synthetase family. In terms of assembly, tetramer of two alpha and two beta subunits.

The protein localises to the cytoplasm. It carries out the reaction tRNA(Gly) + glycine + ATP = glycyl-tRNA(Gly) + AMP + diphosphate. In Salmonella arizonae (strain ATCC BAA-731 / CDC346-86 / RSK2980), this protein is Glycine--tRNA ligase alpha subunit.